The sequence spans 78 residues: Sec-independent protein translocase protein TatA (78 aa).

Residues 1–21 traverse the membrane as a helical segment; sequence MGSLSIWHWIVVVAVILLLFG. Over residues 43–55 the composition is skewed to basic and acidic residues; the sequence is MKDDEKTAEKPEP. The tract at residues 43–78 is disordered; sequence MKDDEKTAEKPEPVKTINHNADGSGAARSDTGSKVI.

Belongs to the TatA/E family. As to quaternary structure, the Tat system comprises two distinct complexes: a TatABC complex, containing multiple copies of TatA, TatB and TatC subunits, and a separate TatA complex, containing only TatA subunits. Substrates initially bind to the TatABC complex, which probably triggers association of the separate TatA complex to form the active translocon.

The protein localises to the cell inner membrane. Functionally, part of the twin-arginine translocation (Tat) system that transports large folded proteins containing a characteristic twin-arginine motif in their signal peptide across membranes. TatA could form the protein-conducting channel of the Tat system. The polypeptide is Sec-independent protein translocase protein TatA (Nitrobacter winogradskyi (strain ATCC 25391 / DSM 10237 / CIP 104748 / NCIMB 11846 / Nb-255)).